Here is a 541-residue protein sequence, read N- to C-terminus: Tegument protein UL21 homolog (541 aa).

This sequence belongs to the alphaherpesvirinae UL21 protein family. Interacts (via C-terminus) with UL16.

It is found in the virion tegument. Its subcellular location is the host cytoplasm. The protein resides in the host nucleus. May participate in DNA packaging/capsid maturation events. Promotes efficient incorporation of tegument proteins UL46, UL49, and US3 homologs into virions. May also play a role in capsid transport to the trans-Golgi network (TGN). The polypeptide is Tegument protein UL21 homolog (Varicella-zoster virus (strain Oka vaccine) (HHV-3)).